Reading from the N-terminus, the 127-residue chain is ATP synthase epsilon chain (127 aa).

It belongs to the ATPase epsilon chain family. As to quaternary structure, F-type ATPases have 2 components, CF(1) - the catalytic core - and CF(0) - the membrane proton channel. CF(1) has five subunits: alpha(3), beta(3), gamma(1), delta(1), epsilon(1). CF(0) has three main subunits: a, b and c.

The protein localises to the cell inner membrane. Functionally, produces ATP from ADP in the presence of a proton gradient across the membrane. This chain is ATP synthase epsilon chain, found in Leptospira interrogans serogroup Icterohaemorrhagiae serovar copenhageni (strain Fiocruz L1-130).